Reading from the N-terminus, the 177-residue chain is Large ribosomal subunit protein bL17 (177 aa).

Positions 136–177 are disordered; sequence AEEEAPAVEAEATEAVEAPVEETAAAEAEAPAEEAADAEKAE. Over residues 138 to 149 the composition is skewed to acidic residues; sequence EEAPAVEAEATE. Residues 150-164 are compositionally biased toward low complexity; it reads AVEAPVEETAAAEAE.

Belongs to the bacterial ribosomal protein bL17 family. In terms of assembly, part of the 50S ribosomal subunit. Contacts protein L32.

This is Large ribosomal subunit protein bL17 from Bifidobacterium longum (strain NCC 2705).